We begin with the raw amino-acid sequence, 125 residues long: UPF0102 protein CCNA_00142 (125 aa).

The protein belongs to the UPF0102 family.

The chain is UPF0102 protein CCNA_00142 from Caulobacter vibrioides (strain NA1000 / CB15N) (Caulobacter crescentus).